Here is an 890-residue protein sequence, read N- to C-terminus: MQQNHMSLSNMIKEVKEVFFHVPALLIPTRYREIYREIDRAPKLLEQSFYTIFIKVWNITEKVTVTDVFYYSSVEDPLGLQSPRHSRWAQNTDEEQRKQARIIIQSVYKPNSFIRITSNKFTRVLITSLFVLTYFQSNGVFQSFPYFESQINGFLFKKMNNINQLEINSTNTCIIKITDLLTHQKSKELLGNSLPTNSILRWKMHSKISDIKTIFNMPEKWIYLPLGLGLENSEQIFSYRNFDICNLTKNSSNIMKIKNNRTILDPKIDKYPLVLKNKENILFFHKLPIQFFLFPYIVLRIWLAPVFVLWWSYQFNSEEKENIKNNLKNIHDIEISTIQKFVAKAITFRDIGGMESLKQELATVAFLLKQKNYSNSYPMGYLFAGPPGTGKTLMAKAMSYEAETPYLYVEGSQFRCREEGVANARVDDLFKQIQNISPCILYIDEIDSIAERREEANKQLEQLKTIGDSIEGSNINIDQKPSDTVLMQFLIYMDGYKKRNDLIIIGATNRIETLDDAIMRPGRFDRQIVFSPPFFEERKDILRIFLRNTKALVDDTTKTMMAERSIGLNGCDLRLLADNILLLSALESRNQQKTIPVINEDTFDRALERVSRIRHIISNYELAFGKYDFYRTAYHEAGIALIHTLLPECRPVYSVKLFPKPLNDRYLEIERENLKVPSSDIISTNNIDYFVQKIVGLLAGRAAESILFDFYPGQISTYLNKTYDPNIQGAYNIAHHIVEFGLLDSVTGVIHYLNSENENNIKDPFVTKINDLIQNKVTLKTNRELRKYSQAASILDFNEFWYEQDYPWQFDFIKKQYIYSNESSRNLDMEIVSILHTLFQYTYDFLKSNEQLLDHLASLVLKNKSISQKEIHLVVNSYGIKIPTKTWKAW.

385-392 (GPPGTGKT) lines the ATP pocket.

This sequence belongs to the Ycf2 family.

Its subcellular location is the plastid. The protein resides in the chloroplast stroma. In terms of biological role, probable ATPase of unknown function. Its presence in a non-photosynthetic plant (Epifagus virginiana) and experiments in tobacco indicate that it has an essential function which is probably not related to photosynthesis. This Mesostigma viride (Green alga) protein is Protein Ycf2 (ycf2).